The sequence spans 20 residues: Blooming-related protein 2 (20 aa).

The interval 1-20 is disordered; it reads VSAEYLERQGPKDDXDCFDD.

In terms of biological role, possible 'checkpoint' protein for cell division in the blooming process. The chain is Blooming-related protein 2 from Prorocentrum triestinum (Red tide alga).